A 209-amino-acid chain; its full sequence is Large ribosomal subunit protein uL3 (209 aa).

Positions 130 to 162 (RGPMTHGSKFKRAPGSMGASSDPSRTFKNKRMP) are disordered.

It belongs to the universal ribosomal protein uL3 family. Part of the 50S ribosomal subunit. Forms a cluster with proteins L14 and L19.

In terms of biological role, one of the primary rRNA binding proteins, it binds directly near the 3'-end of the 23S rRNA, where it nucleates assembly of the 50S subunit. In Clostridium botulinum (strain Alaska E43 / Type E3), this protein is Large ribosomal subunit protein uL3.